Reading from the N-terminus, the 354-residue chain is Uroporphyrinogen decarboxylase (354 aa).

Residues 30–34 (RQAGR), Phe49, Asp79, Tyr156, Ser211, and His326 each bind substrate.

Belongs to the uroporphyrinogen decarboxylase family. As to quaternary structure, homodimer.

It is found in the cytoplasm. The catalysed reaction is uroporphyrinogen III + 4 H(+) = coproporphyrinogen III + 4 CO2. It functions in the pathway porphyrin-containing compound metabolism; protoporphyrin-IX biosynthesis; coproporphyrinogen-III from 5-aminolevulinate: step 4/4. Its function is as follows. Catalyzes the decarboxylation of four acetate groups of uroporphyrinogen-III to yield coproporphyrinogen-III. The chain is Uroporphyrinogen decarboxylase from Salinibacter ruber (strain DSM 13855 / M31).